Consider the following 138-residue polypeptide: Nucleoside diphosphate kinase (138 aa).

Residues Lys-9, Phe-57, Arg-85, Thr-91, Arg-102, and Asn-112 each coordinate ATP. Catalysis depends on His-115, which acts as the Pros-phosphohistidine intermediate.

It belongs to the NDK family. Mg(2+) is required as a cofactor.

It localises to the cytoplasm. The catalysed reaction is a 2'-deoxyribonucleoside 5'-diphosphate + ATP = a 2'-deoxyribonucleoside 5'-triphosphate + ADP. The enzyme catalyses a ribonucleoside 5'-diphosphate + ATP = a ribonucleoside 5'-triphosphate + ADP. Functionally, major role in the synthesis of nucleoside triphosphates other than ATP. The ATP gamma phosphate is transferred to the NDP beta phosphate via a ping-pong mechanism, using a phosphorylated active-site intermediate. In Picrophilus torridus (strain ATCC 700027 / DSM 9790 / JCM 10055 / NBRC 100828 / KAW 2/3), this protein is Nucleoside diphosphate kinase.